We begin with the raw amino-acid sequence, 256 residues long: Necrosis-inducing protein NPP1 (256 aa).

Residues A111–G121 carry the Conserved undecapeptide motif motif. The Conserved heptapeptide motif signature appears at G133 to E139.

It belongs to the Necrosis inducing protein (NPP1) family.

It is found in the secreted. Its function is as follows. Secreted effector that acts as a pathogen-associated molecular pattern (PAMP) recognized by the plant immune system. The protein is Necrosis-inducing protein NPP1 of Phytophthora cinnamomi (Cinnamon fungus).